Consider the following 301-residue polypeptide: Probable alpha-L-glutamate ligase (301 aa).

The region spanning 104 to 287 (LQLLSRKGIG…VAGIIIEYLE (184 aa)) is the ATP-grasp domain. ATP is bound by residues Lys141, 178 to 179 (EY), Asp187, and 211 to 213 (RSN). Mg(2+)-binding residues include Asp248, Glu260, and Asn262. Residues Asp248, Glu260, and Asn262 each contribute to the Mn(2+) site.

Belongs to the RimK family. The cofactor is Mg(2+). Mn(2+) serves as cofactor.

This is Probable alpha-L-glutamate ligase from Azotobacter vinelandii (strain DJ / ATCC BAA-1303).